Here is a 506-residue protein sequence, read N- to C-terminus: MPESRLQRLANLKIGTPQQLRRTSIIGTIGPKTNSCEAITALRKAGLNIIRLNFSHGSYEFHQSVIENAVKSEQQFPGRPLAIALDTKGPEIRTGRTLNDQDLYIPVDHQMIFTTDASFANTSNDKIMYIDYANLTKVIVPGRFIYVDDGILSFKVLQIIDESNLRVQAVNSGYIASHKGVNLPNTDVDLPPLSAKDMKDLQFGVRNGIHIVFASFIRTSEDVLSIRKALGSEGQDIKIISKIENQQGLDNFDEILEVTDGVMIARGDLGIEILAPEVLAIQKKLIAKCNLAGKPVICATQMLDSMTHNPRPTRAEVSDVGNAVLDGADCVMLSGETAKGDYPVNAVNIMAATALIAESTIAHLALYDDLRDATPKPTSTTETVAAAATAAILEQDGKAIVVLSTTGNTARLLSKYRPSCPIILVTRHARTARIAHLYRGVFPFLYEPKRLDDWGEDVHRRLKFGVEMARSFGMVDNGDTVVSIQGFKGGVGHSNTLRISTVGQEF.

Phosphoserine is present on Ser24. Arg51 serves as a coordination point for substrate. Residues Asn53, Ser55, Asp86, and Thr87 each coordinate K(+). Position 53–56 (53–56) interacts with ATP; that stretch reads NFSH. The ATP site is built by Arg93 and Lys179. Residue Glu244 participates in Mg(2+) binding. Positions 267, 268, and 300 each coordinate substrate. Residue Asp268 participates in Mg(2+) binding.

It belongs to the pyruvate kinase family. As to quaternary structure, homotetramer. Requires Mg(2+) as cofactor. K(+) serves as cofactor.

The catalysed reaction is pyruvate + ATP = phosphoenolpyruvate + ADP + H(+). It functions in the pathway carbohydrate degradation; glycolysis; pyruvate from D-glyceraldehyde 3-phosphate: step 5/5. With respect to regulation, not activated by fructose-1,6-bisphosphate. Its function is as follows. May be used by cells under conditions in which the level of glycolytic flux is very low. The protein is Pyruvate kinase 2 (PYK2) of Saccharomyces cerevisiae (strain ATCC 204508 / S288c) (Baker's yeast).